The primary structure comprises 145 residues: UPF0299 membrane protein plu1549 (145 aa).

4 helical membrane passes run Val-6 to Thr-26, Leu-34 to Phe-54, Gly-65 to Met-85, and Ile-95 to Tyr-115.

The protein belongs to the UPF0299 family.

Its subcellular location is the cell inner membrane. This is UPF0299 membrane protein plu1549 from Photorhabdus laumondii subsp. laumondii (strain DSM 15139 / CIP 105565 / TT01) (Photorhabdus luminescens subsp. laumondii).